The chain runs to 498 residues: Swainsonine transporter swnT (498 aa).

Over residues M1–E10 the composition is skewed to basic and acidic residues. The segment at M1–Q21 is disordered. The next 5 membrane-spanning stretches (helical) occupy residues L42–T64, L79–I99, A126–V146, F167–L187, and A193–A213. N-linked (GlcNAc...) asparagine glycosylation is found at N227 and N242. 6 helical membrane-spanning segments follow: residues L272–V292, A316–I336, P370–A390, L398–L418, G436–F456, and Y469–A489.

It belongs to the amino acid-polyamine-organocation (APC) superfamily. Amino acid/choline transporter (ACT) (TC 2.A.3.4) family.

The protein resides in the membrane. Its function is as follows. Transmembrane transporter; part of the gene cluster that mediates the biosynthesis of swainsonine, a cytotoxic fungal alkaloid and a potential cancer therapy drug. Does not mediate the secretion of SW and the exact role of swnT in SW biosynthesis remains to be determined. This chain is Swainsonine transporter swnT, found in Arthroderma benhamiae (strain ATCC MYA-4681 / CBS 112371) (Trichophyton mentagrophytes).